The primary structure comprises 155 residues: MSTKNPSEMPRILVLHGPNLNLLGTREPQHYGADTLDAINARLVARAAASGVACDTFQSNAEYRLIERIHDARTDGTGFIVINPAAFTHTSVALRDALAAVDLPFVEVHLSNVYKREPFRHHSYFSDLAVGVICGLGARGYDHALEHALDTLTAS.

Tyr-31 acts as the Proton acceptor in catalysis. Positions 83, 89, and 96 each coordinate substrate. The Proton donor role is filled by His-109. Residues 110–111 and Arg-120 contribute to the substrate site; that span reads LS.

This sequence belongs to the type-II 3-dehydroquinase family. In terms of assembly, homododecamer.

The catalysed reaction is 3-dehydroquinate = 3-dehydroshikimate + H2O. It functions in the pathway metabolic intermediate biosynthesis; chorismate biosynthesis; chorismate from D-erythrose 4-phosphate and phosphoenolpyruvate: step 3/7. In terms of biological role, catalyzes a trans-dehydration via an enolate intermediate. The sequence is that of 3-dehydroquinate dehydratase from Laribacter hongkongensis (strain HLHK9).